Reading from the N-terminus, the 303-residue chain is Probable WRKY transcription factor 30 (303 aa).

Residues 65–92 are disordered; sequence DQVSQGGGSPKSDDSDQEPLVIKSSKKS. The WRKY DNA-binding region spans 107–175; it reads GVDRTLDDGF…YRGIHSCSQA (69 aa). The span at 266 to 278 shows a compositional bias: low complexity; the sequence is SGSASHSASNSPS. The segment at 266 to 291 is disordered; that stretch reads SGSASHSASNSPSTVPLESPFESYDP.

This sequence belongs to the WRKY group III family. As to quaternary structure, interacts with WRKY53, WRKY54 and WRKY70.

It is found in the nucleus. Functionally, transcription factor. Interacts specifically with the W box (5'-(T)TGAC[CT]-3'), a frequently occurring elicitor-responsive cis-acting element. This chain is Probable WRKY transcription factor 30, found in Arabidopsis thaliana (Mouse-ear cress).